Here is a 219-residue protein sequence, read N- to C-terminus: Mucosal pentraxin (219 aa).

Positions 1–19 are cleaved as a signal peptide; the sequence is MEKLIVGILFLSVLSGSVA. Positions 24 to 219 constitute a Pentraxin (PTX) domain; the sequence is KGKAFIFPQE…YVVIKPKLWP (196 aa). Residue asparagine 51 is glycosylated (N-linked (GlcNAc...) asparagine). A disulfide bridge links cysteine 55 with cysteine 114. Ca(2+)-binding residues include aspartate 77, asparagine 78, glutamate 155, glutamine 156, aspartate 157, and glutamine 167.

This sequence belongs to the pentraxin family. Homopentamer. Pentraxin (or pentaxin) have a discoid arrangement of 5 non-covalently bound subunits. It depends on Ca(2+) as a cofactor. Expressed in colon.

Its subcellular location is the secreted. This chain is Mucosal pentraxin (Mptx1), found in Mus musculus (Mouse).